We begin with the raw amino-acid sequence, 333 residues long: MSSKKKKTDAEAAQVQAAVEVSPDLDVEELEGVGKVTGAKLKEKGFYTVKDVAFASVKELAEIIGNEERALQIIESARKMLGLHSFISALEVYERRKKIRRISTGVRSLDELLGGGIETRAVTEVVGEFGSGKTQLCHQLAVMVQLPEERGGLGAKAIYIDTENTFRPERIMQMARARGLDPDQALNNIFYARAYSSDHQMILVEHAKSIVKQHNVALIVVDSVIAHFRSEFPGRENLAERQQKLNKHVADLLRLADAYDVAVVITNQVMAQPDVFFGNPLRPAGGNILAHGATYRLWLRKSKENIRIVKIFDSPYHPEGEVSFRITEEGLID.

An ATP-binding site is contributed by 127–134; the sequence is GEFGSGKT.

This sequence belongs to the eukaryotic RecA-like protein family.

Involved in DNA repair and in homologous recombination. Binds and assemble on single-stranded DNA to form a nucleoprotein filament. Hydrolyzes ATP in a ssDNA-dependent manner and promotes DNA strand exchange between homologous DNA molecules. The chain is DNA repair and recombination protein RadA from Pyrobaculum arsenaticum (strain DSM 13514 / JCM 11321 / PZ6).